The primary structure comprises 550 residues: Chaperonin GroEL (550 aa).

Residues 30-33 (TLGP), Lys51, 87-91 (DGTTT), Gly415, 479-481 (NAA), and Asp495 contribute to the ATP site.

It belongs to the chaperonin (HSP60) family. Forms a cylinder of 14 subunits composed of two heptameric rings stacked back-to-back. Interacts with the co-chaperonin GroES.

The protein localises to the cytoplasm. The catalysed reaction is ATP + H2O + a folded polypeptide = ADP + phosphate + an unfolded polypeptide.. Together with its co-chaperonin GroES, plays an essential role in assisting protein folding. The GroEL-GroES system forms a nano-cage that allows encapsulation of the non-native substrate proteins and provides a physical environment optimized to promote and accelerate protein folding. In Marinobacter nauticus (strain ATCC 700491 / DSM 11845 / VT8) (Marinobacter aquaeolei), this protein is Chaperonin GroEL.